A 146-amino-acid chain; its full sequence is UPF0260 protein Spea_2441 (146 aa).

The protein belongs to the UPF0260 family.

This Shewanella pealeana (strain ATCC 700345 / ANG-SQ1) protein is UPF0260 protein Spea_2441.